Here is a 99-residue protein sequence, read N- to C-terminus: DNA-binding protein HU (99 aa).

Positions 63-82 are disordered; it reads HRKEREGRNPKTGAKMKIDA.

The protein belongs to the bacterial histone-like protein family. Homodimer.

Functionally, histone-like DNA-binding protein which is capable of wrapping DNA to stabilize it, and thus to prevent its denaturation under extreme environmental conditions. This is DNA-binding protein HU (hup) from Rickettsia prowazekii (strain Madrid E).